We begin with the raw amino-acid sequence, 281 residues long: 18S rRNA (guanine-N(7))-methyltransferase (281 aa).

Over residues 212–231 (LPKGLTESQDADQASESMFT) the composition is skewed to polar residues. Positions 212 to 281 (LPKGLTESQD…YTGRKRKPRF (70 aa)) are disordered. The segment covering 242–256 (RDLVKKSREWVLEKK) has biased composition (basic and acidic residues).

The protein belongs to the class I-like SAM-binding methyltransferase superfamily. BUD23/WBSCR22 family. As to quaternary structure, heterodimer with TRMT112; this heterodimerization is necessary for the metabolic stability and activity of the catalytic subunit BUD23. Interacts with GRIP1. May be ubiquitinated and targeted to degradation in response to pro-inflammatory cytokine signaling.

Its subcellular location is the nucleus. It localises to the nucleoplasm. The protein localises to the cytoplasm. The protein resides in the perinuclear region. It carries out the reaction a guanosine in 18S rRNA + S-adenosyl-L-methionine = an N(7)-methylguanosine in 18S rRNA + S-adenosyl-L-homocysteine. S-adenosyl-L-methionine-dependent methyltransferase that specifically methylates the N(7) position of a guanine in 18S rRNA. Requires the methyltransferase adapter protein TRM112 for full rRNA methyltransferase activity. Involved in the pre-rRNA processing steps leading to small-subunit rRNA production independently of its RNA-modifying catalytic activity. Important for biogenesis end export of the 40S ribosomal subunit independent on its methyltransferase activity. Locus-specific steroid receptor coactivator. Potentiates transactivation by glucocorticoid (NR3C1), mineralocorticoid (NR3C2), androgen (AR) and progesterone (PGR) receptors. Required for the maintenance of open chromatin at the TSC22D3/GILZ locus to facilitate NR3C1 loading on the response elements. Required for maintenance of dimethylation on histone H3 'Lys-79' (H3K79me2), although direct histone methyltransferase activity is not observed in vitro. The sequence is that of 18S rRNA (guanine-N(7))-methyltransferase from Mus musculus (Mouse).